The primary structure comprises 166 residues: Deglycase TK1284 (166 aa).

The PfpI endopeptidase domain maps to 1–166 (MKVLILSADG…WMREFVKLLR (166 aa)). Histidine 101 is an active-site residue.

Belongs to the peptidase C56 family. In terms of assembly, homohexamer formed by a dimer of trimers that assemble into a hollow ring structure.

The protein localises to the cytoplasm. The catalysed reaction is N(omega)-(1-hydroxy-2-oxopropyl)-L-arginyl-[protein] + H2O = lactate + L-arginyl-[protein] + H(+). It catalyses the reaction N(6)-(1-hydroxy-2-oxopropyl)-L-lysyl-[protein] + H2O = lactate + L-lysyl-[protein] + H(+). The enzyme catalyses S-(1-hydroxy-2-oxopropyl)-L-cysteinyl-[protein] + H2O = lactate + L-cysteinyl-[protein] + H(+). It carries out the reaction N(omega)-(1-hydroxy-2-oxoethyl)-L-arginyl-[protein] + H2O = L-arginyl-[protein] + glycolate + H(+). The catalysed reaction is N(6)-(1-hydroxy-2-oxoethyl)-L-lysyl-[protein] + H2O = glycolate + L-lysyl-[protein] + H(+). It catalyses the reaction S-(1-hydroxy-2-oxoethyl)-L-cysteinyl-[protein] + H2O = glycolate + L-cysteinyl-[protein] + H(+). Deglycase that catalyzes the deglycation of the Maillard adducts formed between amino groups of proteins and reactive carbonyl groups of glyoxals. Thus, functions as a protein deglycase that repairs methylglyoxal- and glyoxal-glycated proteins, and releases repaired proteins and lactate or glycolate, respectively. Deglycates cysteine, arginine and lysine residues in proteins, and thus reactivates these proteins by reversing glycation by glyoxals. Acts on early glycation intermediates (hemithioacetals and aminocarbinols), preventing the formation of advanced glycation endproducts (AGE) that cause irreversible damage. Also displays proteolytic activity. The sequence is that of Deglycase TK1284 from Thermococcus kodakarensis (strain ATCC BAA-918 / JCM 12380 / KOD1) (Pyrococcus kodakaraensis (strain KOD1)).